Reading from the N-terminus, the 254-residue chain is Methylthioribulose-1-phosphate dehydratase (254 aa).

Cysteine 110 contacts substrate. 2 residues coordinate Zn(2+): histidine 127 and histidine 129. Glutamate 156 acts as the Proton donor/acceptor in catalysis. A Zn(2+)-binding site is contributed by histidine 212.

This sequence belongs to the aldolase class II family. MtnB subfamily. The cofactor is Zn(2+).

The protein resides in the cytoplasm. It carries out the reaction 5-(methylsulfanyl)-D-ribulose 1-phosphate = 5-methylsulfanyl-2,3-dioxopentyl phosphate + H2O. Its pathway is amino-acid biosynthesis; L-methionine biosynthesis via salvage pathway; L-methionine from S-methyl-5-thio-alpha-D-ribose 1-phosphate: step 2/6. In terms of biological role, catalyzes the dehydration of methylthioribulose-1-phosphate (MTRu-1-P) into 2,3-diketo-5-methylthiopentyl-1-phosphate (DK-MTP-1-P). The protein is Methylthioribulose-1-phosphate dehydratase of Talaromyces marneffei (strain ATCC 18224 / CBS 334.59 / QM 7333) (Penicillium marneffei).